The primary structure comprises 256 residues: 5'-nucleotidase SurE (256 aa).

D8, D9, S40, and N92 together coordinate a divalent metal cation.

It belongs to the SurE nucleotidase family. A divalent metal cation is required as a cofactor.

It localises to the cytoplasm. The enzyme catalyses a ribonucleoside 5'-phosphate + H2O = a ribonucleoside + phosphate. Functionally, nucleotidase that shows phosphatase activity on nucleoside 5'-monophosphates. The sequence is that of 5'-nucleotidase SurE from Rhizobium meliloti (strain 1021) (Ensifer meliloti).